We begin with the raw amino-acid sequence, 403 residues long: MGIRAFLDKIEHNFEKGGKYEKWYALYEAIDTFFYRPGSVTKTTAHVRDGIDLKRMMITVWLCTFPAMFFGMWNTGYQANLIFAQSPELLASQEGWRFALIGSLAGFDPNSLWDNFIQGAAYFLPVYAVTFIVGGFWEVLFASIRKHEVNEGFFVTSVLFALILPPSIPLWQVALGISFGVVIGKEVFGGTGKNFLNPALTGRAFLFFAYPAQMSGDAVWTAVDGFAGATSLSLAASGGIENVINNGITWMDAFIGTIHGSLGETSTLAIAIGGLVLLITKIASWRIVSGVMLGMIGLSLLLNLIGSNTNPMFAMPWYWHLVVGGFAFGMFFMATDPVSASMTNTGKWIFGALIGVMVVLIRVVNPAFPEGMMLAILFANLFAPLIDHFVVQANIKRRLARNV.

The next 9 membrane-spanning stretches (helical) occupy residues 56–76 (MMIT…WNTG), 121–141 (AYFL…EVLF), 163–183 (ILPP…GVVI), 220–240 (WTAV…SGGI), 265–285 (TSTL…IASW), 287–307 (IVSG…LIGS), 312–332 (MFAM…GMFF), 348–368 (WIFG…NPAF), and 371–391 (GMML…HFVV). An FMN phosphoryl threonine modification is found at Thr-230.

It belongs to the NqrB/RnfD family. In terms of assembly, composed of six subunits; NqrA, NqrB, NqrC, NqrD, NqrE and NqrF. The cofactor is FMN.

Its subcellular location is the cell inner membrane. It catalyses the reaction a ubiquinone + n Na(+)(in) + NADH + H(+) = a ubiquinol + n Na(+)(out) + NAD(+). In terms of biological role, NQR complex catalyzes the reduction of ubiquinone-1 to ubiquinol by two successive reactions, coupled with the transport of Na(+) ions from the cytoplasm to the periplasm. NqrA to NqrE are probably involved in the second step, the conversion of ubisemiquinone to ubiquinol. The polypeptide is Na(+)-translocating NADH-quinone reductase subunit B (Ectopseudomonas mendocina (strain ymp) (Pseudomonas mendocina)).